The following is a 411-amino-acid chain: Na(+)-translocating NADH-quinone reductase subunit F (411 aa).

The helical transmembrane segment at 5–25 (VILALGIAAFTVIVLVLVAII) threads the bilayer. The 2Fe-2S ferredoxin-type domain maps to 36 to 130 (GDITIDINDD…NMEVELPEEI (95 aa)). [2Fe-2S] cluster is bound by residues Cys-73, Cys-79, Cys-82, and Cys-114. Residues 133-273 (VKKWECTVIS…SGPFGEFFAK (141 aa)) form the FAD-binding FR-type domain.

The protein belongs to the NqrF family. In terms of assembly, composed of six subunits; NqrA, NqrB, NqrC, NqrD, NqrE and NqrF. [2Fe-2S] cluster is required as a cofactor. FAD serves as cofactor.

The protein localises to the cell inner membrane. The enzyme catalyses a ubiquinone + n Na(+)(in) + NADH + H(+) = a ubiquinol + n Na(+)(out) + NAD(+). Functionally, NQR complex catalyzes the reduction of ubiquinone-1 to ubiquinol by two successive reactions, coupled with the transport of Na(+) ions from the cytoplasm to the periplasm. The first step is catalyzed by NqrF, which accepts electrons from NADH and reduces ubiquinone-1 to ubisemiquinone by a one-electron transfer pathway. This Haemophilus influenzae (strain 86-028NP) protein is Na(+)-translocating NADH-quinone reductase subunit F.